Here is a 62-residue protein sequence, read N- to C-terminus: Conotoxin Lt5.8 (62 aa).

Positions 1–19 (MLCLPVFIILLLLVSPAAT) are cleaved as a signal peptide. Positions 20 to 47 (MPVDLEILKAPTKESRKDFEMRIELLRS) are excised as a propeptide. A Pyrrolidone carboxylic acid modification is found at Gln50. Gln61 bears the Glutamine amide mark.

The protein belongs to the conotoxin T superfamily. Post-translationally, contains 2 disulfide bonds that can be either 'C1-C3, C2-C4' or 'C1-C4, C2-C3', since these disulfide connectivities have been observed for conotoxins with cysteine framework V (for examples, see AC P0DQQ7 and AC P81755). As to expression, expressed by the venom duct.

It is found in the secreted. This chain is Conotoxin Lt5.8, found in Conus litteratus (Lettered cone).